Reading from the N-terminus, the 231-residue chain is NADH-ubiquinone oxidoreductase chain 4 (231 aa).

Helical transmembrane passes span 1-21, 34-54, 63-85, 89-111, 124-146, and 169-189; these read PIAGSMVLAAILLKLGGYGII, LFLPFIVLALWGAILANLTCL, IAYSSISHMGLVVAAIIIQTPWG, AMALMIAHGFTSSALFCLANMTY, GLHNTLPMATTWWLMTNLMNIAI, and TIIILGLSMLITASYSLHMFL.

It belongs to the complex I subunit 4 family.

The protein resides in the mitochondrion membrane. It catalyses the reaction a ubiquinone + NADH + 5 H(+)(in) = a ubiquinol + NAD(+) + 4 H(+)(out). Its function is as follows. Core subunit of the mitochondrial membrane respiratory chain NADH dehydrogenase (Complex I) that is believed to belong to the minimal assembly required for catalysis. Complex I functions in the transfer of electrons from NADH to the respiratory chain. The immediate electron acceptor for the enzyme is believed to be ubiquinone. In Crotalus lepidus (Banded rock rattlesnake), this protein is NADH-ubiquinone oxidoreductase chain 4 (MT-ND4).